The primary structure comprises 92 residues: Small ribosomal subunit protein uS19 (92 aa).

This sequence belongs to the universal ribosomal protein uS19 family. In terms of assembly, part of the 30S ribosomal subunit.

Protein S19 forms a complex with S13 that binds strongly to the 16S ribosomal RNA. The sequence is that of Small ribosomal subunit protein uS19 (rpsS) from Bacillus subtilis (strain 168).